A 152-amino-acid chain; its full sequence is MNIKLSFISIAFLSLSFNVAANEFEKSQEHYKSVTDLKNKIEILELEKKITELSGEIRNARMPKIDKSAPVLSPQPVVKSSEELQKSIEHIEEELKVELAYLVNNGQQKKYTFNLNGKLITLVNGDFVNGWKFIEDQNKIQFSKGNKVIDVN.

The signal sequence occupies residues 1 to 20; sequence MNIKLSFISIAFLSLSFNVA.

Its subcellular location is the periplasm. It localises to the secreted. Its function is as follows. The toxin coregulated pilus (TCP) is essential for successful colonization of the small intestine. The protein is Toxin coregulated pilus biosynthesis protein S (tcpS) of Vibrio cholerae serotype O1 (strain ATCC 39315 / El Tor Inaba N16961).